Reading from the N-terminus, the 375-residue chain is Alpha-2,8-sialyltransferase 8B (375 aa).

The Cytoplasmic portion of the chain corresponds to 1–6 (MQLQFR). A helical; Signal-anchor for type II membrane protein transmembrane segment spans residues 7–23 (SWMLAALTLLVVFLIFA). Residues 24-375 (DISEIEEEIG…LTVGQCDGAT (352 aa)) lie on the Lumenal side of the membrane. N60, N72, N89, and N134 each carry an N-linked (GlcNAc...) asparagine glycan. Disulfide bonds link C157–C307 and C171–C371. Positions 162 and 185 each coordinate CMP-N-acetyl-beta-neuraminate. N-linked (GlcNAc...) asparagine glycosylation is found at N219 and N234. The CMP-N-acetyl-beta-neuraminate site is built by T294, T295, G296, W316, Y329, and H330. The active-site Proton donor/acceptor is the H346.

This sequence belongs to the glycosyltransferase 29 family. Post-translationally, autopolysialylated. Autopolysialylation is not a prerequisite for the polysialylation acitity, but enhances the polysialylation acitity. In terms of tissue distribution, highly expressed in fetal brain, kidney and heart and to a much lesser extent in adult heart and thymus.

It localises to the golgi apparatus membrane. The protein resides in the secreted. It is found in the cell membrane. The enzyme catalyses [N-acetyl-alpha-D-neuraminosyl-(2-&gt;8)](n) + CMP-N-acetyl-beta-neuraminate = [N-acetyl-alpha-D-neuraminosyl-(2-&gt;8)](n+1) + CMP + H(+). It functions in the pathway protein modification; protein glycosylation. Its function is as follows. Catalyzes the transfer of a sialic acid from a CMP-linked sialic acid donor onto a terminal alpha-2,3-, alpha-2,6-, or alpha-2,8-linked sialic acid of an N-linked glycan acceptor through alpha-2,8-linkages. Therefore, participates in polysialic acid synthesis on various sialylated N-acetyllactosaminyl oligosaccharides (alpha-2,3-, alpha-2,6-, or alpha-2,8-linked sialic acid), including NCAM1, NCAM1 N-glycans, FETUB N-glycans, and to a lesser extent sialylparagloboside (SPG) and AHSG, which does not require the initial addition of an alpha 2,8-sialic acid. However, does not exhibit sialic acid-polymerase activity. Catalyzes polysialic acid synthesis in the hippocampal on NCAM1 and supports neurite outgrowth. ST8SIA2-mediated polysialylation influences on oligodendrocyte differentiation and may promote the integrity of myelin and axons. This Homo sapiens (Human) protein is Alpha-2,8-sialyltransferase 8B.